The sequence spans 380 residues: Lipoyl synthase, mitochondrial (380 aa).

Residues Cys104, Cys109, Cys115, Cys135, Cys139, Cys142, and Ser350 each contribute to the [4Fe-4S] cluster site. The region spanning 120 to 339 is the Radical SAM core domain; it reads EHGTQTATIM…ETRGNELGFL (220 aa).

It belongs to the radical SAM superfamily. Lipoyl synthase family. [4Fe-4S] cluster serves as cofactor.

It is found in the mitochondrion. It catalyses the reaction [[Fe-S] cluster scaffold protein carrying a second [4Fe-4S](2+) cluster] + N(6)-octanoyl-L-lysyl-[protein] + 2 oxidized [2Fe-2S]-[ferredoxin] + 2 S-adenosyl-L-methionine + 4 H(+) = [[Fe-S] cluster scaffold protein] + N(6)-[(R)-dihydrolipoyl]-L-lysyl-[protein] + 4 Fe(3+) + 2 hydrogen sulfide + 2 5'-deoxyadenosine + 2 L-methionine + 2 reduced [2Fe-2S]-[ferredoxin]. The protein operates within protein modification; protein lipoylation via endogenous pathway; protein N(6)-(lipoyl)lysine from octanoyl-[acyl-carrier-protein]: step 2/2. Its function is as follows. Catalyzes the radical-mediated insertion of two sulfur atoms into the C-6 and C-8 positions of the octanoyl moiety bound to the lipoyl domains of lipoate-dependent enzymes, thereby converting the octanoylated domains into lipoylated derivatives. This is Lipoyl synthase, mitochondrial from Culex quinquefasciatus (Southern house mosquito).